Consider the following 517-residue polypeptide: GMP synthase [glutamine-hydrolyzing] (517 aa).

The Glutamine amidotransferase type-1 domain occupies 9–199 (RILILDFGSQ…VLGVCGCERL (191 aa)). Cys-86 serves as the catalytic Nucleophile. Residues His-173 and Glu-175 contribute to the active site. Residues 200-392 (WTSESIIEDA…LGLPYNMLYR (193 aa)) enclose the GMPS ATP-PPase domain. 227-233 (SGGVDSS) is an ATP binding site.

Homodimer.

It carries out the reaction XMP + L-glutamine + ATP + H2O = GMP + L-glutamate + AMP + diphosphate + 2 H(+). It participates in purine metabolism; GMP biosynthesis; GMP from XMP (L-Gln route): step 1/1. Its function is as follows. Catalyzes the synthesis of GMP from XMP. The chain is GMP synthase [glutamine-hydrolyzing] from Vibrio campbellii (strain ATCC BAA-1116).